The sequence spans 266 residues: tRNA pseudouridine synthase A (266 aa).

Aspartate 51 acts as the Nucleophile in catalysis. Tyrosine 106 lines the substrate pocket.

The protein belongs to the tRNA pseudouridine synthase TruA family.

It catalyses the reaction uridine(38/39/40) in tRNA = pseudouridine(38/39/40) in tRNA. In terms of biological role, formation of pseudouridine at positions 38, 39 and 40 in the anticodon stem and loop of transfer RNAs. The chain is tRNA pseudouridine synthase A from Pyrococcus furiosus (strain ATCC 43587 / DSM 3638 / JCM 8422 / Vc1).